We begin with the raw amino-acid sequence, 410 residues long: Chaperone protein dnaJ 15 (410 aa).

The 66-residue stretch at 17 to 82 (DPYEVLCVSK…EKRRHYDNAG (66 aa)) folds into the J domain. The stretch at 284–344 (AKTYEDTTEK…TVDELLKQRD (61 aa)) forms a coiled coil. The disordered stretch occupies residues 351–410 (SVVKTPSGNNLSNGSSSKAQGDESKGDGDSAGEEGGTENRDKSKRKWFNLNLKGSDKKLG). The segment covering 357–367 (SGNNLSNGSSS) has biased composition (low complexity).

The protein belongs to the DnaJ family. B/II subfamily. In terms of tissue distribution, expressed at high levels in root cap, root tip meristematic region and elongation zones, and at lower levels in mature part of roots (at protein level). Constitutively expressed in seedlings, etiolated or not, roots, rosette leaves, cauline leaves, stems, flowers, siliques and pollen.

The protein resides in the cytoplasm. The protein localises to the cytoskeleton. It is found in the endoplasmic reticulum membrane. Its subcellular location is the golgi apparatus membrane. Its function is as follows. Plays a continuous role in plant development probably in the structural organization of compartments. Seems to be involved in early gravitropic signal transduction within the gravity-perceiving cells (statocytes), where it influences pH changes and auxin distribution. Probably affects the localization and/or activity of auxin efflux carrier components (PIN proteins) or other proteins involved in lateral auxin transport. This Arabidopsis thaliana (Mouse-ear cress) protein is Chaperone protein dnaJ 15 (ATJ15).